Here is a 354-residue protein sequence, read N- to C-terminus: Peptide-N(4)-(N-acetyl-beta-D-glucosaminyl)asparagine amidase F (354 aa).

The N-terminal stretch at 1 to 40 (MRKLLIFSISAYLMAGIVSCKGVDSATPVTEDRLALNAVN) is a signal peptide. C91 and C96 are oxidised to a cystine. Catalysis depends on residues D100, E158, and E246. 2 disulfide bridges follow: C244–C248 and C271–C292.

As to quaternary structure, monomer.

The catalysed reaction is Hydrolysis of an N(4)-(acetyl-beta-D-glucosaminyl)asparagine residue in which the glucosamine residue may be further glycosylated, to yield a (substituted) N-acetyl-beta-D-glucosaminylamine and a peptide containing an aspartate residue.. Its function is as follows. Cleaves an entire glycan from a glycoprotein. Requires that the glycosylated asparagine moiety (reaction 1) be substituted on its amino (R1) and carboxyl (R2) terminus with a polypeptide chain. This Elizabethkingia miricola (Chryseobacterium miricola) protein is Peptide-N(4)-(N-acetyl-beta-D-glucosaminyl)asparagine amidase F (ngl).